The chain runs to 563 residues: Delta-1-pyrroline-5-carboxylate dehydrogenase, mitochondrial (563 aa).

The transit peptide at methionine 1–tryptophan 23 directs the protein to the mitochondrion. Lysine 30 carries the post-translational modification N6-succinyllysine. Serine 43 carries the post-translational modification Phosphoserine. Lysine 51 is subject to N6-acetyllysine. N6-acetyllysine; alternate is present on residues lysine 92, lysine 98, lysine 113, lysine 129, and lysine 174. 5 positions are modified to N6-succinyllysine; alternate: lysine 92, lysine 98, lysine 113, lysine 129, and lysine 174. NAD(+) contacts are provided by residues serine 207, lysine 232, and glycine 285–threonine 289. Glutamate 313 functions as the Proton acceptor in the catalytic mechanism. The residue at position 317 (lysine 317) is an N6-acetyllysine. Lysine 346 bears the N6-succinyllysine mark. Cysteine 347 (nucleophile) is an active-site residue. N6-acetyllysine occurs at positions 364 and 375. Lysine 394 bears the N6-succinyllysine mark. Glutamate 446 is an NAD(+) binding site. Lysine 461 is subject to N6-acetyllysine. At lysine 508 the chain carries N6-acetyllysine; alternate. The residue at position 508 (lysine 508) is an N6-succinyllysine; alternate. Position 512 (serine 512) interacts with substrate.

The protein belongs to the aldehyde dehydrogenase family. Homodimer.

It is found in the mitochondrion matrix. The enzyme catalyses L-glutamate 5-semialdehyde + NAD(+) + H2O = L-glutamate + NADH + 2 H(+). It participates in amino-acid degradation; L-proline degradation into L-glutamate; L-glutamate from L-proline: step 2/2. In terms of biological role, irreversible conversion of delta-1-pyrroline-5-carboxylate (P5C), derived either from proline or ornithine, to glutamate. This is a necessary step in the pathway interconnecting the urea and tricarboxylic acid cycles. The preferred substrate is glutamic gamma-semialdehyde, other substrates include succinic, glutaric and adipic semialdehydes. This is Delta-1-pyrroline-5-carboxylate dehydrogenase, mitochondrial (Aldh4a1) from Rattus norvegicus (Rat).